The chain runs to 355 residues: Serpentine receptor class epsilon-1 (355 aa).

Transmembrane regions (helical) follow at residues 28–48, 56–76, 102–122, 144–164, 172–192, 232–252, and 268–288; these read FELL…YATI, LNFI…GRFI, ILSS…SLAV, ISLF…IVML, VMAF…LVLF, VVLF…MYMS, and FAFN…IIFS.

It belongs to the nematode receptor-like protein sre family.

The protein resides in the membrane. The chain is Serpentine receptor class epsilon-1 (sre-1) from Caenorhabditis elegans.